The chain runs to 311 residues: RNA polymerase sigma factor SigA4 (311 aa).

The tract at residues 78-148 (MLKANLRLVV…TRAIDNHART (71 aa)) is sigma-70 factor domain-2. The Interaction with polymerase core subunit RpoC motif lies at 102-105 (DLIQ). Residues 157 to 234 (EKISRIKKMT…DPKSLEPMDA (78 aa)) are sigma-70 factor domain-3. The sigma-70 factor domain-4 stretch occupies residues 247-304 (WLAHLTEREQQVLQLRFGLHDGEQHTLAEIGRRLNVSRERIRQVEARALQKLRVLSQQ). Positions 273 to 292 (LAEIGRRLNVSRERIRQVEA) form a DNA-binding region, H-T-H motif.

Belongs to the sigma-70 factor family.

It localises to the cytoplasm. In terms of biological role, sigma factors are initiation factors that promote the attachment of RNA polymerase to specific initiation sites and are then released. This Synechococcus elongatus (strain ATCC 33912 / PCC 7942 / FACHB-805) (Anacystis nidulans R2) protein is RNA polymerase sigma factor SigA4 (sigA4).